A 614-amino-acid polypeptide reads, in one-letter code: Threonine--tRNA ligase (614 aa).

The segment at 1–138 (MRTLMIHSDY…HPLSELSRTI (138 aa)) is editing domain. The disordered stretch occupies residues 133–157 (ELSRTITTEPEEESEDSEEEPSEPS). The span at 141-154 (EPEEESEDSEEEPS) shows a compositional bias: acidic residues. The interval 200-495 (PHVRLMREKE…TDKGNKPSLP (296 aa)) is catalytic. Cys-292, His-344, and His-466 together coordinate Zn(2+).

The protein belongs to the class-II aminoacyl-tRNA synthetase family. Homodimer. Zn(2+) is required as a cofactor.

The protein localises to the cytoplasm. The catalysed reaction is tRNA(Thr) + L-threonine + ATP = L-threonyl-tRNA(Thr) + AMP + diphosphate + H(+). In terms of biological role, catalyzes the attachment of threonine to tRNA(Thr) in a two-step reaction: L-threonine is first activated by ATP to form Thr-AMP and then transferred to the acceptor end of tRNA(Thr). Also edits incorrectly charged L-seryl-tRNA(Thr). This chain is Threonine--tRNA ligase, found in Methanosphaera stadtmanae (strain ATCC 43021 / DSM 3091 / JCM 11832 / MCB-3).